Consider the following 100-residue polypeptide: Competence protein ComGE (100 aa).

The helical transmembrane segment at 15–35 (VILLEAVVALAIFASIATLLL) threads the bilayer.

As to quaternary structure, the transformation pili are flexible filaments, consisting mainly of the major pilin ComGC and smaller amounts of the minor pilins, including at least ComGD, ComGF and ComGG, and perhaps ComGE. Interacts with ComGD. Interacts with ComGF. Interacts with ComGG.

It is found in the cell membrane. The protein localises to the cell surface. Functionally, required for formation of the type IV-like pilus (T4P) that plays a role in transformation. Transformation pili are dynamically extended and retracted, perhaps thereby promoting DNA uptake and transformation. Involved in transformation. Required for DNA binding. The sequence is that of Competence protein ComGE from Streptococcus pneumoniae (strain ATCC BAA-255 / R6).